A 205-amino-acid chain; its full sequence is UPF0637 protein OB1420 (205 aa).

This sequence belongs to the UPF0637 family.

In Oceanobacillus iheyensis (strain DSM 14371 / CIP 107618 / JCM 11309 / KCTC 3954 / HTE831), this protein is UPF0637 protein OB1420.